Here is a 61-residue protein sequence, read N- to C-terminus: Probable tautomerase SSP1389 (61 aa).

The active-site Proton acceptor; via imino nitrogen is P2.

Belongs to the 4-oxalocrotonate tautomerase family.

In Staphylococcus saprophyticus subsp. saprophyticus (strain ATCC 15305 / DSM 20229 / NCIMB 8711 / NCTC 7292 / S-41), this protein is Probable tautomerase SSP1389.